A 120-amino-acid polypeptide reads, in one-letter code: NAD(P)H-quinone oxidoreductase subunit 3, chloroplastic (120 aa).

3 helical membrane passes run 9–29, 64–84, and 88–108; these read IFWA…LISG, MFAL…PWAM, and VLGV…IIGS.

This sequence belongs to the complex I subunit 3 family. As to quaternary structure, NDH is composed of at least 16 different subunits, 5 of which are encoded in the nucleus.

Its subcellular location is the plastid. It localises to the chloroplast thylakoid membrane. The catalysed reaction is a plastoquinone + NADH + (n+1) H(+)(in) = a plastoquinol + NAD(+) + n H(+)(out). It catalyses the reaction a plastoquinone + NADPH + (n+1) H(+)(in) = a plastoquinol + NADP(+) + n H(+)(out). In terms of biological role, NDH shuttles electrons from NAD(P)H:plastoquinone, via FMN and iron-sulfur (Fe-S) centers, to quinones in the photosynthetic chain and possibly in a chloroplast respiratory chain. The immediate electron acceptor for the enzyme in this species is believed to be plastoquinone. Couples the redox reaction to proton translocation, and thus conserves the redox energy in a proton gradient. In Drimys granadensis, this protein is NAD(P)H-quinone oxidoreductase subunit 3, chloroplastic.